The sequence spans 301 residues: Probable alpha-L-glutamate ligase (301 aa).

One can recognise an ATP-grasp domain in the interval 104–287; that stretch reads LQLLSRRGIG…VAGMIIGYLE (184 aa). ATP contacts are provided by residues Lys141, 178-179, Asp187, and 211-213; these read EY and RSN. Mg(2+) contacts are provided by Asp248, Glu260, and Asn262. Mn(2+)-binding residues include Asp248, Glu260, and Asn262.

This sequence belongs to the RimK family. Requires Mg(2+) as cofactor. The cofactor is Mn(2+).

The chain is Probable alpha-L-glutamate ligase from Pseudomonas syringae pv. syringae (strain B728a).